The sequence spans 351 residues: L-threonine 3-dehydrogenase (351 aa).

A Zn(2+)-binding site is contributed by C39. Residues T41 and H44 each act as charge relay system in the active site. 6 residues coordinate Zn(2+): H64, E65, C94, C97, C100, and C108. NAD(+)-binding positions include I176, D196, R201, 271–273 (LGI), and 295–296 (IY).

It belongs to the zinc-containing alcohol dehydrogenase family. As to quaternary structure, homotetramer. Zn(2+) serves as cofactor.

The protein resides in the cytoplasm. It catalyses the reaction L-threonine + NAD(+) = (2S)-2-amino-3-oxobutanoate + NADH + H(+). It participates in amino-acid degradation; L-threonine degradation via oxydo-reductase pathway; glycine from L-threonine: step 1/2. Its function is as follows. Catalyzes the NAD(+)-dependent oxidation of L-threonine to 2-amino-3-ketobutyrate. The sequence is that of L-threonine 3-dehydrogenase from Francisella tularensis subsp. holarctica (strain OSU18).